A 158-amino-acid polypeptide reads, in one-letter code: NAD(P)H-quinone oxidoreductase subunit J, chloroplastic (158 aa).

This sequence belongs to the complex I 30 kDa subunit family. NDH is composed of at least 16 different subunits, 5 of which are encoded in the nucleus.

It is found in the plastid. Its subcellular location is the chloroplast thylakoid membrane. It carries out the reaction a plastoquinone + NADH + (n+1) H(+)(in) = a plastoquinol + NAD(+) + n H(+)(out). The enzyme catalyses a plastoquinone + NADPH + (n+1) H(+)(in) = a plastoquinol + NADP(+) + n H(+)(out). Functionally, NDH shuttles electrons from NAD(P)H:plastoquinone, via FMN and iron-sulfur (Fe-S) centers, to quinones in the photosynthetic chain and possibly in a chloroplast respiratory chain. The immediate electron acceptor for the enzyme in this species is believed to be plastoquinone. Couples the redox reaction to proton translocation, and thus conserves the redox energy in a proton gradient. The chain is NAD(P)H-quinone oxidoreductase subunit J, chloroplastic from Platanus occidentalis (Sycamore).